A 1072-amino-acid polypeptide reads, in one-letter code: Translation initiation factor IF-2 (1072 aa).

Disordered stretches follow at residues 55 to 369 (ILDK…TGTA) and 426 to 452 (ELVDVSKNKERGQRKRTSGDTQSVSKQ). Low complexity-rich tracts occupy residues 91-100 (AEASQAAEPA), 108-118 (EPATFAAEEPV), 126-179 (APRA…AEVA), and 186-212 (EAPQAPVEAPRAAVPAPAAAQPRPSVQ). The span at 218 to 230 (PQPPPRSPVPPAV) shows a compositional bias: pro residues. Over residues 231-245 (RTPSSTSSSATVVSR) the composition is skewed to low complexity. A compositionally biased stretch (gly residues) spans 253–307 (QRGGPGGGRPGGPGGPGGRPGGPGGPGGRPGGPGGPGGRPGGPGGPGGRPGGPGG). Positions 426–436 (ELVDVSKNKER) are enriched in basic and acidic residues. One can recognise a tr-type G domain in the interval 570–737 (PRPPVVAIMG…NLALQAEVLE (168 aa)). Residues 579 to 586 (GHVDHGKT) form a G1 region. 579–586 (GHVDHGKT) contacts GTP. Residues 604 to 608 (GITQH) are G2. Residues 625-628 (DTPG) are G3. Residues 625 to 629 (DTPGH) and 679 to 682 (NKMD) each bind GTP. The tract at residues 679–682 (NKMD) is G4. The tract at residues 715–717 (SAK) is G5.

The protein belongs to the TRAFAC class translation factor GTPase superfamily. Classic translation factor GTPase family. IF-2 subfamily.

The protein resides in the cytoplasm. Functionally, one of the essential components for the initiation of protein synthesis. Protects formylmethionyl-tRNA from spontaneous hydrolysis and promotes its binding to the 30S ribosomal subunits. Also involved in the hydrolysis of GTP during the formation of the 70S ribosomal complex. In Myxococcus xanthus (strain DK1622), this protein is Translation initiation factor IF-2.